The sequence spans 353 residues: Photosystem II D2 protein (353 aa).

The residue at position 2 (Thr-2) is an N-acetylthreonine. Thr-2 is modified (phosphothreonine). A helical membrane pass occupies residues 41–61; the sequence is CAYFALGGWFTGTTFVTSWYT. Residue His-118 coordinates chlorophyll a. Residues 125-141 form a helical membrane-spanning segment; the sequence is GFMLRQFELARSVQLRP. 2 residues coordinate pheophytin a: Gln-130 and Asn-143. Residues 153–166 form a helical membrane-spanning segment; sequence VFVSVFLIYPLGQS. Residue His-198 participates in chlorophyll a binding. The chain crosses the membrane as a helical span at residues 208–228; the sequence is AALLCAIHGATVENTLFEDGD. Residues His-215 and Phe-262 each contribute to the a plastoquinone site. Residue His-215 participates in Fe cation binding. His-269 is a Fe cation binding site. A helical membrane pass occupies residues 279 to 295; it reads GLWMSALGVVGLALNLR.

The protein belongs to the reaction center PufL/M/PsbA/D family. In terms of assembly, PSII is composed of 1 copy each of membrane proteins PsbA, PsbB, PsbC, PsbD, PsbE, PsbF, PsbH, PsbI, PsbJ, PsbK, PsbL, PsbM, PsbT, PsbX, PsbY, PsbZ, Psb30/Ycf12, at least 3 peripheral proteins of the oxygen-evolving complex and a large number of cofactors. It forms dimeric complexes. The cofactor is The D1/D2 heterodimer binds P680, chlorophylls that are the primary electron donor of PSII, and subsequent electron acceptors. It shares a non-heme iron and each subunit binds pheophytin, quinone, additional chlorophylls, carotenoids and lipids. There is also a Cl(-1) ion associated with D1 and D2, which is required for oxygen evolution. The PSII complex binds additional chlorophylls, carotenoids and specific lipids..

It localises to the plastid. It is found in the chloroplast thylakoid membrane. It carries out the reaction 2 a plastoquinone + 4 hnu + 2 H2O = 2 a plastoquinol + O2. Photosystem II (PSII) is a light-driven water:plastoquinone oxidoreductase that uses light energy to abstract electrons from H(2)O, generating O(2) and a proton gradient subsequently used for ATP formation. It consists of a core antenna complex that captures photons, and an electron transfer chain that converts photonic excitation into a charge separation. The D1/D2 (PsbA/PsbD) reaction center heterodimer binds P680, the primary electron donor of PSII as well as several subsequent electron acceptors. D2 is needed for assembly of a stable PSII complex. This Dioscorea elephantipes (Elephant's foot yam) protein is Photosystem II D2 protein.